Consider the following 158-residue polypeptide: Large ribosomal subunit protein uL11 (158 aa).

The protein belongs to the universal ribosomal protein uL11 family. Part of the ribosomal stalk of the 50S ribosomal subunit. Interacts with L10 and the large rRNA to form the base of the stalk. L10 forms an elongated spine to which L12 dimers bind in a sequential fashion forming a multimeric L10(L12)X complex.

Functionally, forms part of the ribosomal stalk which helps the ribosome interact with GTP-bound translation factors. The polypeptide is Large ribosomal subunit protein uL11 (Methanoculleus marisnigri (strain ATCC 35101 / DSM 1498 / JR1)).